The primary structure comprises 1866 residues: Protein strawberry notch homolog (1866 aa).

The segment covering 19–28 has biased composition (low complexity); it reads QQSSPTPSTS. Disordered stretches follow at residues 19–63, 132–151, 156–253, 561–581, and 1112–1308; these read QQSS…HSSS, TAPT…IVPK, LFET…GLPI, GMAS…QKAK, and GLSG…ARGS. Composition is skewed to polar residues over residues 37–63 and 134–146; these read QSFS…HSSS and PTVN…TPTV. Residues 161 to 176 are compositionally biased toward low complexity; the sequence is TADSPTPSGDTSTTAS. Polar residues-rich tracts occupy residues 191–203 and 210–228; these read DRQN…TARS and TPST…LTQR. The segment covering 229-239 has biased composition (low complexity); it reads SHTSSPASSAS. Residues 566–577 show a composition bias toward polar residues; the sequence is RLQTTPQPLTKS. Residues 1112 to 1126 are compositionally biased toward low complexity; the sequence is GLSGIGRSSMSSSTG. Over residues 1142-1152 the composition is skewed to acidic residues; the sequence is DGSDDEVENDM. Positions 1164 to 1177 are enriched in basic and acidic residues; sequence ESAREEAEGARTLE. Positions 1194-1213 are enriched in acidic residues; sequence SSSDDSDEEVVKDEDEDEEA. 2 stretches are compositionally biased toward basic and acidic residues: residues 1262-1281 and 1290-1304; these read RDEE…EERR and RRAE…EELQ.

Belongs to the SBNO family. In terms of tissue distribution, expressed in the somatic gonad, neurons, hypodermal cells, seam cells, the excretory system, and intestinal cells (at protein level).

The protein resides in the nucleus. Transcriptional activator that functions upstream of the let-60/Ras and let-23/EGFR signaling pathways to positively regulate lin-3 expression and thereby promote vulval induction. Plays a role in excretory duct development. Plays a role in male tail development. This is Protein strawberry notch homolog from Caenorhabditis elegans.